The following is a 338-amino-acid chain: Pseudouridylate synthase TRUB1 (338 aa).

The residue at position 2 (Ala2) is an N-acetylalanine. The active-site Nucleophile is Asp109.

The protein belongs to the pseudouridine synthase TruB family.

It is found in the nucleus. Its subcellular location is the cytoplasm. It localises to the cytosol. The catalysed reaction is a uridine in mRNA = a pseudouridine in mRNA. The enzyme catalyses a uridine in tRNA = a pseudouridine in tRNA. It catalyses the reaction uridine(55) in tRNA = pseudouridine(55) in tRNA. Pseudouridine synthase that catalyzes pseudouridylation of mRNAs and tRNAs. Mediates pseudouridylation of mRNAs with the consensus sequence 5'-GUUCNANNC-3', harboring a stem-loop structure. Constitutes the major pseudouridine synthase acting on mRNAs. Also catalyzes pseudouridylation of some tRNAs, including synthesis of pseudouridine(55) from uracil-55, in the psi GC loop of a subset of tRNAs. Promotes the processing of pri-let-7 microRNAs (pri-miRNAs) independently of its RNA pseudouridylate synthase activity. Acts by binding to the stem-loop structure on pri-let-7, preventing LIN28-binding (LIN28A and/or LIN28B), thereby enhancing the interaction between pri-let-7 and the microprocessor DGCR8, which mediates miRNA maturation. The chain is Pseudouridylate synthase TRUB1 from Mus musculus (Mouse).